The chain runs to 368 residues: tRNA 2-selenouridine synthase (368 aa).

The region spanning methionine 15–aspartate 138 is the Rhodanese domain. Cysteine 98 functions as the S-selanylcysteine intermediate in the catalytic mechanism.

Belongs to the SelU family. Monomer.

The catalysed reaction is 5-methylaminomethyl-2-thiouridine(34) in tRNA + selenophosphate + (2E)-geranyl diphosphate + H2O + H(+) = 5-methylaminomethyl-2-selenouridine(34) in tRNA + (2E)-thiogeraniol + phosphate + diphosphate. It catalyses the reaction 5-methylaminomethyl-2-thiouridine(34) in tRNA + (2E)-geranyl diphosphate = 5-methylaminomethyl-S-(2E)-geranyl-thiouridine(34) in tRNA + diphosphate. The enzyme catalyses 5-methylaminomethyl-S-(2E)-geranyl-thiouridine(34) in tRNA + selenophosphate + H(+) = 5-methylaminomethyl-2-(Se-phospho)selenouridine(34) in tRNA + (2E)-thiogeraniol. It carries out the reaction 5-methylaminomethyl-2-(Se-phospho)selenouridine(34) in tRNA + H2O = 5-methylaminomethyl-2-selenouridine(34) in tRNA + phosphate. Involved in the post-transcriptional modification of the uridine at the wobble position (U34) of tRNA(Lys), tRNA(Glu) and tRNA(Gln). Catalyzes the conversion of 2-thiouridine (S2U-RNA) to 2-selenouridine (Se2U-RNA). Acts in a two-step process involving geranylation of 2-thiouridine (S2U) to S-geranyl-2-thiouridine (geS2U) and subsequent selenation of the latter derivative to 2-selenouridine (Se2U) in the tRNA chain. This Shewanella woodyi (strain ATCC 51908 / MS32) protein is tRNA 2-selenouridine synthase.